A 493-amino-acid polypeptide reads, in one-letter code: Probable cytochrome P450 CYP36A1 (493 aa).

3 helical membrane-spanning segments follow: residues 1–21 (MLFAQLVILVIIVMLFLCRFA), 60–80 (GGIFTLWLPFPTIVICDYDML), and 290–310 (QLIVAIYDLYSAGMETIIIVL). Cysteine 440 serves as a coordination point for heme.

The protein belongs to the cytochrome P450 family. Heme serves as cofactor.

It localises to the membrane. Cytochromes P450 are a group of heme-thiolate monooxygenases. They oxidize a variety of structurally unrelated compounds, including steroids, fatty acids, and xenobiotics. In Caenorhabditis elegans, this protein is Probable cytochrome P450 CYP36A1 (cyp-36A1).